The primary structure comprises 712 residues: Sesterterpene synthase btcA (712 aa).

The interval 1 to 332 (MTTIWEHCVD…CANCPRHHAW (332 aa)) is terpene cyclase. Residue D96 participates in Mg(2+) binding. Residues D96, N234, 238-242 (SWDRE), and 328-329 (RH) contribute to the substrate site. Residues 96–100 (DDLCD) carry the DDXXD 1 motif. The short motif at 234–242 (NDYWSWDRE) is the NSE/DTE element. Positions 333–706 (RDEESSPSER…VMRIVLSRLS (374 aa)) are prenyltransferase. The tract at residues 334–373 (DEESSPSERSFSPSNEGIEDPRLSPGASTTSSMSQKSSPA) is disordered. Composition is skewed to low complexity over residues 340–349 (SERSFSPSNE) and 361–373 (STTSSMSQKSSPA). The isopentenyl diphosphate site is built by K414, R417, and H446. Residues D453 and D457 each contribute to the Mg(2+) site. The DDXXD 2 signature appears at 453 to 457 (DDIED). Residue R462 coordinates dimethylallyl diphosphate. Isopentenyl diphosphate is bound at residue R463. Positions 540, 541, 580, 587, 597, and 607 each coordinate dimethylallyl diphosphate.

It in the N-terminal section; belongs to the terpene synthase family. This sequence in the C-terminal section; belongs to the FPP/GGPP synthase family. As to quaternary structure, hexamer. Mg(2+) serves as cofactor.

It catalyses the reaction isopentenyl diphosphate + (2E,6E)-farnesyl diphosphate = (2E,6E,10E)-geranylgeranyl diphosphate + diphosphate. The catalysed reaction is isopentenyl diphosphate + (2E,6E,10E)-geranylgeranyl diphosphate = (2E,6E,10E,14E)-geranylfarnesyl diphosphate + diphosphate. It participates in secondary metabolite biosynthesis; terpenoid biosynthesis. Functionally, bifunctional terpene synthase; part of the gene cluster that mediates the biosynthesis of betaestacins. The bifunctional terpene synthase btcA converts isopentenyl diphosphate (IPP) and dimethylallyl diphosphate (DMAPP) into the sesterterpene betaestacin I. The C-terminal prenyltransferase (PT) domain of btcA catalyzes formation of GFPP, whereas the N-terminal terpene cyclase (TC) domain catalyzes the cyclization of GFPP into betaestacin I. The cytochrome P450 monooxygenase btcB oxidizes the C25 methyl group of betaestacin I to yield the carboxylic acid betaestacin IV via the alcohol betaestacin III. The cytochrome P450 monooxygenase btcC further catalyzes the multistep oxidation of betaestacin IV to produce several compounds, including betaestacins Va, Vb, Vc and VI. The protein is Sesterterpene synthase btcA of Colletotrichum orbiculare (strain 104-T / ATCC 96160 / CBS 514.97 / LARS 414 / MAFF 240422) (Cucumber anthracnose fungus).